Here is a 901-residue protein sequence, read N- to C-terminus: MSDHSAQNLEKTYNHHEVEERWRSAHWEAIGTFHAEHSRVLKEGATPYTVLMPPPNVTGSLTLGHVLNHTLQDIFIRYARMMGKEALWLPGTDHAGIATQTVVEKKLRKEGVTRHDLGRRDFLDKVWEWREEYGGLILRQLRKLGISCDWRRNLFTMDERASEAVINTFVALYREGLIYRGRRIINWCPVSQTALSDEEVIMKSRRDKLVYISYPLAKDPTRSITIATVRPETILADVAIAVNPNDERYADLIGELVIVPIAGRHVPVIADDYVDIEFGTGALKITPAHDPNDYEVAKRHNLPVFSVIGKDARMTDECGYAGMDRFDARDKIVADLAELGYLVKLEEYEHNVGYSERADVVVEPYLSEQWFVKMQPLAEPALKVVNDGEIRFHPEHWINTYRHWMENIQDWCISRQLWWGHRIPAWYDDKGNVWVASSYEEACHLAGTDKLSQDEDVLDTWFSSWLWPLTTLGWTGPHSDNDDLRAFYPTDTLVTGPDIIFFWVARMIMAGLHFKGDVPFRDVYFTSIIRDMKGRKLSKSLGNSPDPLKVIDTYGTDALRFTIVYIAPLGQDVLFGEEKCELGRNFATKIWNASRFVFMQREKLFATREEFVEAFANFTPQRELMSSAGRWLMSRYNAMLERYHQAMANFKVNDMVKIVHEFFWGDYCDWYVEALKSELTGDITEERGRHAVCLAVSVLEGVLKALHPVMPFITDEIWHAIAPRSAEETIATEAMPQPDASWRGEDAAAFDLVRNMVSEIRSLRSAFNVPHDLRAQAVIRASSPAALVALQTGRAIFPAMTKCEVELGESVERPAHSAASVVDGNELFIKLEGLISFEKEKQRLEKEITKVTAYIESLEKKLSNEKFVSNAPADVVAKEKEKLEESRSMVLKLQGNLEVLS.

The short motif at 536–540 (KLSKS) is the 'KMSKS' region element. Position 539 (lysine 539) interacts with ATP. The stretch at 831-901 (LEGLISFEKE…KLQGNLEVLS (71 aa)) forms a coiled coil.

It belongs to the class-I aminoacyl-tRNA synthetase family. ValS type 1 subfamily. As to quaternary structure, monomer.

The protein resides in the cytoplasm. The enzyme catalyses tRNA(Val) + L-valine + ATP = L-valyl-tRNA(Val) + AMP + diphosphate. Its function is as follows. Catalyzes the attachment of valine to tRNA(Val). As ValRS can inadvertently accommodate and process structurally similar amino acids such as threonine, to avoid such errors, it has a 'posttransfer' editing activity that hydrolyzes mischarged Thr-tRNA(Val) in a tRNA-dependent manner. The chain is Valine--tRNA ligase from Chlorobaculum tepidum (strain ATCC 49652 / DSM 12025 / NBRC 103806 / TLS) (Chlorobium tepidum).